Consider the following 436-residue polypeptide: MTKPTIAIVGRANVGKSTIFNRIVGERVSIVEDTPGVTRDRIYSSGEWLTHEFNIIDTGGIELGDEPFQEQIRAQAEIAIEEADVIIFMVNGRDGITNEDDFVAKLLFKSSKPVVLGVNKIDNPEMRADIYEFYSLGFGEPFPISGSHGLGIGDLLDEAAKHFPEQQEEDYDDDVIKFSLIGRPNVGKSSLINAILGEERVIVSPVAGTTRDAIDTVYTFENQEYVMIDTAGMRKKGKVYEATERYSVLRALKAIERSNVVLVVIDAEEGIIEQDKKIAGYAHEAGKAIVIVVNKWDTVEKDSKTMKKFEDKVRENFQFLDYAPIAFVSAKERKRLNTLFPLINMAGENHRKRVQSSTLNEVITDAVAMNPTPTHKGSRLNIFYTTQVAIEPPTFVFFVNDVEMMHFSYQRFLENRIRAAFGFEGTPLHLIARKRN.

2 consecutive EngA-type G domains span residues 4-167 and 176-351; these read PTIA…PEQQ and IKFS…ENHR. Residues 10 to 17, 57 to 61, 119 to 122, 182 to 189, 229 to 233, and 294 to 297 each bind GTP; these read GRANVGKS, DTGGI, NKID, GRPNVGKS, DTAGM, and NKWD. The KH-like domain occupies 352 to 436; it reads KRVQSSTLNE…PLHLIARKRN (85 aa).

This sequence belongs to the TRAFAC class TrmE-Era-EngA-EngB-Septin-like GTPase superfamily. EngA (Der) GTPase family. In terms of assembly, associates with the 50S ribosomal subunit.

In terms of biological role, GTPase that plays an essential role in the late steps of ribosome biogenesis. This chain is GTPase Der, found in Macrococcus caseolyticus (strain JCSC5402) (Macrococcoides caseolyticum).